Here is a 121-residue protein sequence, read N- to C-terminus: Small ribosomal subunit protein uS11 (121 aa).

Belongs to the universal ribosomal protein uS11 family. As to quaternary structure, part of the 30S ribosomal subunit. Interacts with proteins S7 and S18. Binds to IF-3.

Located on the platform of the 30S subunit, it bridges several disparate RNA helices of the 16S rRNA. Forms part of the Shine-Dalgarno cleft in the 70S ribosome. The protein is Small ribosomal subunit protein uS11 of Mycoplasmoides gallisepticum (strain R(low / passage 15 / clone 2)) (Mycoplasma gallisepticum).